A 318-amino-acid chain; its full sequence is Peroxisomal and mitochondrial division factor 1 (318 aa).

Residues 1–39 (MADVEDRAAKGISDYDQGGVKTTELERKIEDMENKNQEL) are disordered. Over 1-291 (MADVEDRAAK…QKGSLEAEYQ (291 aa)) the chain is Cytoplasmic. Residues 19–260 (GVKTTELERK…KKVEEGNKTV (242 aa)) are a coiled coil. Over residues 23 to 39 (TELERKIEDMENKNQEL) the composition is skewed to basic and acidic residues. A helical transmembrane segment spans residues 292 to 312 (WPVVAAGSVGAAGLVAATFFV). Over 313-318 (CYSKLR) the chain is Mitochondrial intermembrane.

As to quaternary structure, homodimer. Interacts with PMD2.

The protein resides in the peroxisome membrane. The protein localises to the mitochondrion outer membrane. Its function is as follows. Involved in morphogenesis and proliferation of peroxisomes and mitochondria, independently from the previously defined pathway controlled by the FIS1-DRP3 complex. The chain is Peroxisomal and mitochondrial division factor 1 from Arabidopsis thaliana (Mouse-ear cress).